Here is a 516-residue protein sequence, read N- to C-terminus: tRNA-2-methylthio-N(6)-dimethylallyladenosine synthase (516 aa).

One can recognise an MTTase N-terminal domain in the interval 17–133 (RSFEVRTFGC…LPSLLSRSEH (117 aa)). Residues Cys-26, Cys-62, Cys-96, Cys-170, Cys-174, and Cys-177 each coordinate [4Fe-4S] cluster. Positions 156-392 (RESAYAGWVS…LALQERISTE (237 aa)) constitute a Radical SAM core domain. In terms of domain architecture, TRAM spans 395-466 (AKLIGTEVEL…PFFLIADSGV (72 aa)). Disordered regions lie at residues 409–438 (SGGR…QGHV) and 492–516 (GLGL…GCGC). Over residues 412–438 (RKNDKTQRMTGRSRDGRLVHFDPQGHV) the composition is skewed to basic and acidic residues.

This sequence belongs to the methylthiotransferase family. MiaB subfamily. Monomer. [4Fe-4S] cluster is required as a cofactor.

Its subcellular location is the cytoplasm. It carries out the reaction N(6)-dimethylallyladenosine(37) in tRNA + (sulfur carrier)-SH + AH2 + 2 S-adenosyl-L-methionine = 2-methylsulfanyl-N(6)-dimethylallyladenosine(37) in tRNA + (sulfur carrier)-H + 5'-deoxyadenosine + L-methionine + A + S-adenosyl-L-homocysteine + 2 H(+). In terms of biological role, catalyzes the methylthiolation of N6-(dimethylallyl)adenosine (i(6)A), leading to the formation of 2-methylthio-N6-(dimethylallyl)adenosine (ms(2)i(6)A) at position 37 in tRNAs that read codons beginning with uridine. The sequence is that of tRNA-2-methylthio-N(6)-dimethylallyladenosine synthase from Corynebacterium diphtheriae (strain ATCC 700971 / NCTC 13129 / Biotype gravis).